Here is a 121-residue protein sequence, read N- to C-terminus: Type II secretion system protein I (121 aa).

Positions 1–6 are cleaved as a propeptide — leader sequence; it reads MNKQKG. At M7 the chain carries N-methylmethionine. A helical membrane pass occupies residues 7-27; the sequence is MTLLEVLVALAIFSLAGLTLL.

The protein belongs to the GSP I family. Type II secretion is composed of four main components: the outer membrane complex, the inner membrane complex, the cytoplasmic secretion ATPase and the periplasm-spanning pseudopilus. Interacts with core component PulG. Interacts with pseudopilins PulJ and PulK. Post-translationally, cleaved by prepilin peptidase. In terms of processing, methylated by prepilin peptidase at the amino group of the N-terminal methionine once the leader sequence is cleaved by prepilin peptidase.

The protein localises to the cell inner membrane. Functionally, component of the type II secretion system required for the energy-dependent secretion of extracellular factors such as proteases and toxins from the periplasm. Part of the pseudopilus tip complex that is critical for the recognition and binding of secretion substrates. The polypeptide is Type II secretion system protein I (pulI) (Klebsiella michiganensis (strain ATCC 8724 / DSM 4798 / JCM 20051 / NBRC 3318 / NRRL B-199 / KCTC 1686 / BUCSAV 143 / CCM 1901)).